A 645-amino-acid polypeptide reads, in one-letter code: Glucans biosynthesis glucosyltransferase H (645 aa).

Residues 1 to 12 (MDGTVTLSSTPT) are compositionally biased toward polar residues. The interval 1–22 (MDGTVTLSSTPTAIPPVSALDA) is disordered. 7 consecutive transmembrane segments (helical) span residues 64–84 (LIGG…SVLW), 98–118 (LFTL…AGFV), 423–443 (APMW…GVGI), 465–485 (AIWI…LGYI), 504–524 (AVSI…VMYL), 559–579 (YGGL…VSPA), and 580–600 (LAAW…VVAL).

The protein belongs to the glycosyltransferase 2 family. OpgH subfamily.

It localises to the cell inner membrane. It participates in glycan metabolism; osmoregulated periplasmic glucan (OPG) biosynthesis. Involved in the biosynthesis of osmoregulated periplasmic glucans (OPGs). This Xanthomonas oryzae pv. oryzae (strain MAFF 311018) protein is Glucans biosynthesis glucosyltransferase H.